Here is a 228-residue protein sequence, read N- to C-terminus: Ankyrin repeat domain-containing protein 46 (228 aa).

ANK repeat units follow at residues Gln-11 to Ile-40, Arg-44 to Thr-74, Gln-77 to Ile-103, and Gln-107 to Gly-138. Residues Val-195–Gly-215 form a helical membrane-spanning segment.

The protein resides in the membrane. The protein is Ankyrin repeat domain-containing protein 46 (Ankrd46) of Rattus norvegicus (Rat).